A 374-amino-acid polypeptide reads, in one-letter code: WD repeat-containing protein JIP5 (374 aa).

WD repeat units follow at residues 21–61 (AYTS…GETS), 68–107 (PSKRTARALSIEENGDEIWMGGKSGSLLCALTPPKVIQLS), 120–158 (AHECPINRVYCVNRNLVATGDDDGVIKLWDPRQADSIRT), 161–200 (QHFDYISDFTYFDDKRQLVATSGDGHLSVIDIRSNKSTPL), 205–244 (DQEDELLSIVPIKGGQKAIVGSGLGILSVWNRQMGWADSV), 249–287 (GHPASIDAIVALTPDIIATGSEDGMIRVIQVLPHKFLGV), and 290–330 (THEE…EDSD). The span at 325–344 (LFEDSDEDDEMEEDEPDSDE) shows a compositional bias: acidic residues. The tract at residues 325 to 374 (LFEDSDEDDEMEEDEPDSDEEKSKKKKKDNGMKDMSRGQAENDGSFFADL) is disordered.

The protein belongs to the WD repeat WDR55 family.

It is found in the nucleus. It localises to the nucleolus. This chain is WD repeat-containing protein JIP5 (JIP5), found in Cryptococcus neoformans var. neoformans serotype D (strain B-3501A) (Filobasidiella neoformans).